A 291-amino-acid polypeptide reads, in one-letter code: ATP synthase gamma chain (291 aa).

The protein belongs to the ATPase gamma chain family. In terms of assembly, F-type ATPases have 2 components, CF(1) - the catalytic core - and CF(0) - the membrane proton channel. CF(1) has five subunits: alpha(3), beta(3), gamma(1), delta(1), epsilon(1). CF(0) has three main subunits: a, b and c.

It localises to the cell membrane. Its function is as follows. Produces ATP from ADP in the presence of a proton gradient across the membrane. The gamma chain is believed to be important in regulating ATPase activity and the flow of protons through the CF(0) complex. In Buchnera aphidicola subsp. Schizaphis graminum (strain Sg), this protein is ATP synthase gamma chain.